The primary structure comprises 289 residues: Nucleotide-binding protein Francci3_1634 (289 aa).

Position 13–20 (13–20) interacts with ATP; it reads GLSGAGRS. A GTP-binding site is contributed by 64-67; the sequence is DVRG.

Belongs to the RapZ-like family.

In terms of biological role, displays ATPase and GTPase activities. The polypeptide is Nucleotide-binding protein Francci3_1634 (Frankia casuarinae (strain DSM 45818 / CECT 9043 / HFP020203 / CcI3)).